Reading from the N-terminus, the 396-residue chain is Tyrosine--tRNA ligase (396 aa).

Residue Tyr-36 coordinates L-tyrosine. The 'HIGH' region signature appears at 41–50 (PTANSLHIGN). L-tyrosine is bound by residues Tyr-165 and Gln-169. Residues 225-229 (KMGKT) carry the 'KMSKS' region motif. Lys-228 provides a ligand contact to ATP. One can recognise an S4 RNA-binding domain in the interval 331–394 (TNLIDYLVET…KKSFLTIKTV (64 aa)).

Belongs to the class-I aminoacyl-tRNA synthetase family. TyrS type 1 subfamily. Homodimer.

Its subcellular location is the cytoplasm. The catalysed reaction is tRNA(Tyr) + L-tyrosine + ATP = L-tyrosyl-tRNA(Tyr) + AMP + diphosphate + H(+). Catalyzes the attachment of tyrosine to tRNA(Tyr) in a two-step reaction: tyrosine is first activated by ATP to form Tyr-AMP and then transferred to the acceptor end of tRNA(Tyr). This Mycoplasma genitalium (strain ATCC 33530 / DSM 19775 / NCTC 10195 / G37) (Mycoplasmoides genitalium) protein is Tyrosine--tRNA ligase.